Here is a 596-residue protein sequence, read N- to C-terminus: Elongation factor 4 (596 aa).

Positions 2-184 (KHIRNFSIIA…VIVAQIPPPE (183 aa)) constitute a tr-type G domain. GTP is bound by residues 14–19 (DHGKST) and 131–134 (NKID).

This sequence belongs to the TRAFAC class translation factor GTPase superfamily. Classic translation factor GTPase family. LepA subfamily.

The protein localises to the cell inner membrane. It catalyses the reaction GTP + H2O = GDP + phosphate + H(+). Its function is as follows. Required for accurate and efficient protein synthesis under certain stress conditions. May act as a fidelity factor of the translation reaction, by catalyzing a one-codon backward translocation of tRNAs on improperly translocated ribosomes. Back-translocation proceeds from a post-translocation (POST) complex to a pre-translocation (PRE) complex, thus giving elongation factor G a second chance to translocate the tRNAs correctly. Binds to ribosomes in a GTP-dependent manner. The chain is Elongation factor 4 from Shewanella halifaxensis (strain HAW-EB4).